The sequence spans 86 residues: Large ribosomal subunit protein bL27 (86 aa).

The segment at 1–22 (MAHKKAGGSSRNGRDSESKRLG) is disordered.

The protein belongs to the bacterial ribosomal protein bL27 family.

The sequence is that of Large ribosomal subunit protein bL27 from Acidithiobacillus ferrooxidans (strain ATCC 23270 / DSM 14882 / CIP 104768 / NCIMB 8455) (Ferrobacillus ferrooxidans (strain ATCC 23270)).